Consider the following 131-residue polypeptide: Large ribosomal subunit protein bL19 (131 aa).

The segment at 107-131 (GKSARIAERAERGSDKGKAAPAAAE) is disordered. Residues 111-124 (RIAERAERGSDKGK) show a composition bias toward basic and acidic residues.

It belongs to the bacterial ribosomal protein bL19 family.

In terms of biological role, this protein is located at the 30S-50S ribosomal subunit interface and may play a role in the structure and function of the aminoacyl-tRNA binding site. The chain is Large ribosomal subunit protein bL19 from Methylobacterium sp. (strain 4-46).